The sequence spans 684 residues: MEDVFKGIEKEIIKIYKIPERKGRFSNFKFKNKEINELIDALGFKLYLHQVKALKYLYNKKDVVVTTSTASGKSEIFRLAIFDNFLSNPDDRYLLIYPTRALINNQYEKFSMENELFYKITNKRVKAEILTGDVGLEKRREILKDKPNVLFTTPDMLHYQILKNHNNYLWLLKNLKLLVVDELHVYRGVFGTNMVYVFKRLLKLLKRLNNNLQILCLSATLKNPKEFVKLLFNRDFEVVDKSYNPSSRKYLAILEPKNLDNKQLLRRLIENLVDNNIKTLVFFDTRKETEKLMRFLLNSKVFYKLSTYKGTLPKYVREEIEEKFKNGEILALLTTNALELGIDIGDLDAVINYGIPPDGIFSLIQRFGRAGRRDKEALNIIVLRKDGLDYYYKEHLNELYERIRKGIIEYMPVNIKNRFVTKKHLHYLISELKIVDFDELNDFEKEIVKELEREGKIKIYKNPITNKTEIRNVKQPIYSSIRTASDESYYLILDKPWIKSKLLNKTQSEILSFINWLKIKGYVIEEVDKDEYYRSLITGMPYFSRGKLFIAKDKIGIRKFHFIFADELDMFWDVEALQKKEEEIDILDIYDKKSYKDIDIYYGRLRVRKIYEGFIVRGVDVDKYYQELLALKDNGILDAEIDLFKDFFGLNFISVKFNKKIIRDFETDGIWLCYFQIILGMLTK.

Positions 54-239 constitute a Helicase ATP-binding domain; that stretch reads LKYLYNKKDV…LLFNRDFEVV (186 aa). Residue 67-74 participates in ATP binding; that stretch reads TSTASGKS. A DEVH box motif is present at residues 181 to 184; sequence DELH. Residues 264 to 419 form the Helicase C-terminal domain; the sequence is LLRRLIENLV…YMPVNIKNRF (156 aa).

Belongs to the helicase family.

This is an uncharacterized protein from Methanocaldococcus jannaschii (strain ATCC 43067 / DSM 2661 / JAL-1 / JCM 10045 / NBRC 100440) (Methanococcus jannaschii).